Reading from the N-terminus, the 210-residue chain is Tissue inhibitor of metalloproteinase (210 aa).

The first 27 residues, 1-27 (MDLRKHLGLLTLLLVAVFAFYGRPADA), serve as a signal peptide directing secretion. Cys28 lines the Zn(2+) pocket. Involved in metalloproteinase-binding stretches follow at residues 28 to 31 (CSCM) and 93 to 94 (DA). Disulfide bonds link Cys28-Cys96, Cys30-Cys118, Cys145-Cys195, Cys150-Cys155, and Cys165-Cys180. The region spanning 28–145 (CSCMPSHPQT…SGGYAKATNC (118 aa)) is the NTR domain.

The protein belongs to the protease inhibitor I35 (TIMP) family. In terms of tissue distribution, expressed in heads of female and male adult flies. Expressed at the time of eclosion in unopened wings of adult flies. Strongly expressed at the tip of ovarian germarium region 1 where germline stem cells (GSCs) and cystoblasts reside and in region 2 of the germarium.

It localises to the secreted. Its function is as follows. Metalloproteinase inhibitor that acts on both matrix metalloproteinases Mmp1 and Mmp2 in vitro. Complexes with metalloproteinases and irreversibly inactivates them by binding to their catalytic zinc cofactor. Required for wing maturation which is the final step in morphogenesis of the adult fly. Involved in the negative regulation of developmental tissue invasion for imaginal disk eversion during metamorphosis by inhibiting Mmp-mediated basement membrane (BM) degradation. Required for oogenesis and for the long-term maintainance of germarial structure and shape in the adult ovaries. Required for maintaining composition and biophysical properties of the extracellular matrix (ECM), and for the normal organization and cyst production of the germline stem cell (GSC) niche. The protein is Tissue inhibitor of metalloproteinase of Drosophila melanogaster (Fruit fly).